The sequence spans 311 residues: HPr kinase/phosphorylase (311 aa).

Catalysis depends on residues His-138 and Lys-159. 153–160 contributes to the ATP binding site; it reads GDSGIGKS. Ser-160 is a binding site for Mg(2+). The Proton acceptor; for phosphorylation activity. Proton donor; for dephosphorylation activity role is filled by Asp-177. The tract at residues 201–210 is important for the catalytic mechanism of both phosphorylation and dephosphorylation; it reads LEIRGVGIID. Position 202 (Glu-202) interacts with Mg(2+). Arg-243 is an active-site residue. The interval 264 to 269 is important for the catalytic mechanism of dephosphorylation; that stretch reads PVKTGR.

It belongs to the HPrK/P family. As to quaternary structure, homohexamer. The cofactor is Mg(2+).

The catalysed reaction is [HPr protein]-L-serine + ATP = [HPr protein]-O-phospho-L-serine + ADP + H(+). It carries out the reaction [HPr protein]-O-phospho-L-serine + phosphate + H(+) = [HPr protein]-L-serine + diphosphate. In terms of biological role, catalyzes the ATP- as well as the pyrophosphate-dependent phosphorylation of a specific serine residue in HPr, a phosphocarrier protein of the phosphoenolpyruvate-dependent sugar phosphotransferase system (PTS). HprK/P also catalyzes the pyrophosphate-producing, inorganic phosphate-dependent dephosphorylation (phosphorolysis) of seryl-phosphorylated HPr (P-Ser-HPr). The two antagonistic activities of HprK/P are regulated by several intracellular metabolites, which change their concentration in response to the absence or presence of rapidly metabolisable carbon sources (glucose, fructose, etc.) in the growth medium. Therefore, by controlling the phosphorylation state of HPr, HPrK/P is a sensor enzyme that plays a major role in the regulation of carbon metabolism and sugar transport: it mediates carbon catabolite repression (CCR), and regulates PTS-catalyzed carbohydrate uptake and inducer exclusion. The sequence is that of HPr kinase/phosphorylase from Streptococcus sanguinis (strain SK36).